The following is a 150-amino-acid chain: uncharacterized protein (150 aa).

This is an uncharacterized protein from Acidianus bottle-shaped virus (isolate Italy/Pozzuoli) (ABV).